The following is a 301-amino-acid chain: Probable alpha-L-glutamate ligase (301 aa).

In terms of domain architecture, ATP-grasp spans 104 to 287 (LQLLSRKGVG…IAGMVIDFIE (184 aa)). ATP is bound by residues Lys141, 178-179 (EY), Asp187, and 211-213 (RSN). Positions 248, 260, and 262 each coordinate Mg(2+). Mn(2+)-binding residues include Asp248, Glu260, and Asn262.

It belongs to the RimK family. Mg(2+) serves as cofactor. Requires Mn(2+) as cofactor.

The chain is Probable alpha-L-glutamate ligase from Pseudoalteromonas translucida (strain TAC 125).